A 530-amino-acid chain; its full sequence is Glucose-6-phosphate isomerase (530 aa).

The Proton donor role is filled by Glu-356. Residues His-387 and Lys-502 contribute to the active site.

The protein belongs to the GPI family.

The protein localises to the cytoplasm. The enzyme catalyses alpha-D-glucose 6-phosphate = beta-D-fructose 6-phosphate. Its pathway is carbohydrate biosynthesis; gluconeogenesis. It functions in the pathway carbohydrate degradation; glycolysis; D-glyceraldehyde 3-phosphate and glycerone phosphate from D-glucose: step 2/4. Its function is as follows. Catalyzes the reversible isomerization of glucose-6-phosphate to fructose-6-phosphate. The protein is Glucose-6-phosphate isomerase of Borrelia garinii subsp. bavariensis (strain ATCC BAA-2496 / DSM 23469 / PBi) (Borreliella bavariensis).